A 465-amino-acid polypeptide reads, in one-letter code: MATTFRSQTLSKDDVNYRMHFRMINEQQVEDITIQFFYKPHTISLLTVTVLSLMYFAFTRDDGDPDSNLRVGLILLVSFFLVISVLAFPNGPFTRPHPAIWRIVFGLSVLYFLFLVFIIFLNWDQVKALMFWLDPNLRYAKREADVMEYAVNCHVITWERILSHFDIFAFSHFWGWGMKALLIRSYGLCWTISITWELTELFFMHLLPNFAECWWDQVILDILLCNGGGIWLGMTVCRFLEMRTYHWASIKDIHSTTGKIKRAVLQFTPASWTYVRWLDPKSSLQRVMGVYLFMIIWQLTELNTFFLKHIFVFPACHALSWCRILFIGIITAPTVRQYYAYLTDTQCKRVGTQCWVFGAIAFLEALACIKFGQDLFSKTQILYVILWLVCLAFITFLCLYVMVWYAENYGPRQKSFSECEDSIYSEAGDSVTECKGEFEIDSTTSCSTRKRRDSGDSRTINGMEK.

The Cytoplasmic portion of the chain corresponds to 1-35 (MATTFRSQTLSKDDVNYRMHFRMINEQQVEDITIQ). Residues 36 to 56 (FFYKPHTISLLTVTVLSLMYF) form a helical membrane-spanning segment. Over 57–70 (AFTRDDGDPDSNLR) the chain is Lumenal. The chain crosses the membrane as a helical span at residues 71–91 (VGLILLVSFFLVISVLAFPNG). Topologically, residues 92–102 (PFTRPHPAIWR) are cytoplasmic. Residues 103-123 (IVFGLSVLYFLFLVFIIFLNW) form a helical membrane-spanning segment. Topologically, residues 124 to 286 (DQVKALMFWL…WLDPKSSLQR (163 aa)) are lumenal. Residues 287–307 (VMGVYLFMIIWQLTELNTFFL) traverse the membrane as a helical segment. At 308-309 (KH) the chain is on the cytoplasmic side. Residues 310 to 330 (IFVFPACHALSWCRILFIGII) traverse the membrane as a helical segment. Residues 331–355 (TAPTVRQYYAYLTDTQCKRVGTQCW) lie on the Lumenal side of the membrane. Residues 356–376 (VFGAIAFLEALACIKFGQDLF) traverse the membrane as a helical segment. Topologically, residues 377–380 (SKTQ) are cytoplasmic. A helical transmembrane segment spans residues 381-401 (ILYVILWLVCLAFITFLCLYV). The Lumenal portion of the chain corresponds to 402-465 (MVWYAENYGP…DSRTINGMEK (64 aa)). The interval 446–465 (CSTRKRRDSGDSRTINGMEK) is disordered.

This sequence belongs to the phosphatidyl serine synthase family.

It localises to the endoplasmic reticulum membrane. The enzyme catalyses a 1,2-diacyl-sn-glycero-3-phosphoethanolamine + L-serine = a 1,2-diacyl-sn-glycero-3-phospho-L-serine + ethanolamine. The catalysed reaction is a 1,2-diacyl-sn-glycero-3-phosphocholine + L-serine = a 1,2-diacyl-sn-glycero-3-phospho-L-serine + choline. It participates in phospholipid metabolism; phosphatidylserine biosynthesis. Its function is as follows. Catalyzes a base-exchange reaction in which the polar head group of phosphatidylethanolamine (PE) or phosphatidylcholine (PC) is replaced by L-serine. Catalyzes mainly the conversion of phosphatidylcholine but also converts, in vitro and to a lesser extent, phosphatidylethanolamine. The protein is Phosphatidylserine synthase 1 (ptdss1) of Danio rerio (Zebrafish).